Here is a 542-residue protein sequence, read N- to C-terminus: Probable myosin-binding protein 6 (542 aa).

Positions 1–21 are cleaved as a signal peptide; the sequence is MYIQLLCFFLFLFLLLQATMS. The chain crosses the membrane as a helical span at residues 39–59; that stretch reads FLIYTVLEWSLIVFLFIDGVI. Positions 219-239 are disordered; that stretch reads SFLAPAPSPRVSHNKLSENES. Positions 300 to 398 constitute a GTD-binding domain; it reads SILNQLKKEV…ELEAEFEVYR (99 aa). A disordered region spans residues 419-480; it reads GNASAYDDCQ…DEEKGSESKE (62 aa). The segment covering 437 to 456 has biased composition (polar residues); sequence AVSSSNQQENGENIDQNGQS. A compositionally biased stretch (basic and acidic residues) spans 471–480; the sequence is DEEKGSESKE.

It is found in the membrane. Probable membrane-anchored myosin receptors. The sequence is that of Probable myosin-binding protein 6 from Arabidopsis thaliana (Mouse-ear cress).